The chain runs to 173 residues: Transcription factor E (173 aa).

Residues proline 6–asparagine 89 enclose the HTH TFE/IIEalpha-type domain.

The protein belongs to the TFE family. In terms of assembly, monomer. Interaction with RNA polymerase subunits RpoF and RpoE is necessary for Tfe stimulatory transcription activity. Able to interact with Tbp and RNA polymerase in the absence of DNA promoter. Interacts both with the preinitiation and elongation complexes.

Transcription factor that plays a role in the activation of archaeal genes transcribed by RNA polymerase. Facilitates transcription initiation by enhancing TATA-box recognition by TATA-box-binding protein (Tbp), and transcription factor B (Tfb) and RNA polymerase recruitment. Not absolutely required for transcription in vitro, but particularly important in cases where Tbp or Tfb function is not optimal. It dynamically alters the nucleic acid-binding properties of RNA polymerases by stabilizing the initiation complex and destabilizing elongation complexes. Seems to translocate with the RNA polymerase following initiation and acts by binding to the non template strand of the transcription bubble in elongation complexes. In Ignicoccus hospitalis (strain KIN4/I / DSM 18386 / JCM 14125), this protein is Transcription factor E.